The following is a 240-amino-acid chain: MLTRKQLDLLRFIQQRMRETGVPPSFDEMKDALDLKSKSGIHRLITALEERGFLRRLPNRARAIEVIRIPDAVVPPSGEVVRFTPSVVEGGRTAAPAAKAAPMPSSLGSDDNGRSISIPVMGRIAAGTPISAIQSQSRTVAMSPDFLAGGEHYALEVRGDSMIEAGILDGDLVVIRRQDTANTGDIVVALIDDEEATLKRLRRRGSSIALEAANPAYETRVLGPDRVRIQGRLVSLIRKY.

A DNA-binding region (H-T-H motif) is located at residues 26 to 46; the sequence is FDEMKDALDLKSKSGIHRLIT. Active-site for autocatalytic cleavage activity residues include S161 and K199.

This sequence belongs to the peptidase S24 family. In terms of assembly, homodimer.

The enzyme catalyses Hydrolysis of Ala-|-Gly bond in repressor LexA.. Represses a number of genes involved in the response to DNA damage (SOS response), including recA and lexA. In the presence of single-stranded DNA, RecA interacts with LexA causing an autocatalytic cleavage which disrupts the DNA-binding part of LexA, leading to derepression of the SOS regulon and eventually DNA repair. The chain is LexA repressor from Methylobacterium nodulans (strain LMG 21967 / CNCM I-2342 / ORS 2060).